Here is a 283-residue protein sequence, read N- to C-terminus: Acetylglutamate kinase (283 aa).

Substrate is bound by residues 64–65 (GG), R86, and N178.

This sequence belongs to the acetylglutamate kinase family. ArgB subfamily.

It is found in the cytoplasm. The catalysed reaction is N-acetyl-L-glutamate + ATP = N-acetyl-L-glutamyl 5-phosphate + ADP. It functions in the pathway amino-acid biosynthesis; L-arginine biosynthesis; N(2)-acetyl-L-ornithine from L-glutamate: step 2/4. Its function is as follows. Catalyzes the ATP-dependent phosphorylation of N-acetyl-L-glutamate. This chain is Acetylglutamate kinase, found in Lactococcus lactis subsp. cremoris (strain MG1363).